Reading from the N-terminus, the 239-residue chain is Ribulose-phosphate 3-epimerase (239 aa).

S9 contacts substrate. Residues H34, D36, and H78 each coordinate a divalent metal cation. Catalysis depends on D36, which acts as the Proton acceptor. Residues H78, 154–157, 183–185, and 205–207 each bind substrate; these read GFGG, DGG, and GTS. D183 contributes to the a divalent metal cation binding site. Residue D183 is the Proton donor of the active site.

Belongs to the ribulose-phosphate 3-epimerase family. Co(2+) serves as cofactor. It depends on Fe(2+) as a cofactor. The cofactor is Mn(2+). Requires Zn(2+) as cofactor.

It carries out the reaction D-ribulose 5-phosphate = D-xylulose 5-phosphate. It participates in carbohydrate degradation; pentose phosphate pathway; D-xylulose 5-phosphate from D-ribulose 5-phosphate (non-oxidative stage): step 1/1. Its function is as follows. Catalyzes the reversible epimerization of D-ribulose 5-phosphate to D-xylulose 5-phosphate. The protein is Ribulose-phosphate 3-epimerase (RPE1) of Eremothecium gossypii (strain ATCC 10895 / CBS 109.51 / FGSC 9923 / NRRL Y-1056) (Yeast).